A 254-amino-acid polypeptide reads, in one-letter code: 3-dehydroquinate dehydratase (254 aa).

3-dehydroquinate-binding positions include 47 to 49 and Arg83; that span reads EWR. His144 acts as the Proton donor/acceptor in catalysis. Lys171 acts as the Schiff-base intermediate with substrate in catalysis. Arg214, Ser233, and Gln237 together coordinate 3-dehydroquinate.

This sequence belongs to the type-I 3-dehydroquinase family. As to quaternary structure, homodimer.

The enzyme catalyses 3-dehydroquinate = 3-dehydroshikimate + H2O. Its pathway is metabolic intermediate biosynthesis; chorismate biosynthesis; chorismate from D-erythrose 4-phosphate and phosphoenolpyruvate: step 3/7. Its function is as follows. Involved in the third step of the chorismate pathway, which leads to the biosynthesis of aromatic amino acids. Catalyzes the cis-dehydration of 3-dehydroquinate (DHQ) and introduces the first double bond of the aromatic ring to yield 3-dehydroshikimate. This chain is 3-dehydroquinate dehydratase, found in Clostridium botulinum (strain Eklund 17B / Type B).